We begin with the raw amino-acid sequence, 65 residues long: uncharacterized protein (65 aa).

This is an uncharacterized protein from Invertebrate iridescent virus 6 (IIV-6).